Consider the following 77-residue polypeptide: UPF0337 protein CE0198 (77 aa).

The tract at residues 1 to 77 (MGDLSNKAEG…PDVEHPEAVN (77 aa)) is disordered. Basic and acidic residues-rich tracts occupy residues 30–56 (DEGRADQTKADIKEAVSDAGDKIKDGA) and 64–77 (QDKDPDVEHPEAVN).

The protein belongs to the UPF0337 (CsbD) family.

This Corynebacterium efficiens (strain DSM 44549 / YS-314 / AJ 12310 / JCM 11189 / NBRC 100395) protein is UPF0337 protein CE0198.